The sequence spans 532 residues: Muscarinic acetylcholine receptor M5 (532 aa).

At 1–29 the chain is on the extracellular side; it reads MEGDSYGNATTINGTPVNHQPLERHRLWE. Residue Asn8 is glycosylated (N-linked (GlcNAc...) asparagine). A helical transmembrane segment spans residues 30–53; it reads VITIAAVTAVVSLITIVGNVLVMI. At 54–66 the chain is on the cytoplasmic side; it reads SFKVNSQLKTVNN. A helical membrane pass occupies residues 67 to 87; sequence YYLLSLACADLIIGIFSMNLY. Residues 88-104 are Extracellular-facing; it reads TTYILMGRWALGSLACD. A helical membrane pass occupies residues 105 to 126; it reads LWLALDYVASNASVMNLLVISF. Topologically, residues 127-146 are cytoplasmic; sequence DRYFSITRPLTYRAKRTPKR. Residues 147 to 169 traverse the membrane as a helical segment; sequence AGIMIGLAWLISFILWAPAILCW. Residues 170-191 lie on the Extracellular side of the membrane; it reads QYLVGKRTVPPDECQIQFLSEP. A helical transmembrane segment spans residues 192-214; it reads TITFGTAIAAFYIPVSVMTILYC. Over 215-443 the chain is Cytoplasmic; it reads RIYRETEKRT…LVKERKAAQT (229 aa). Residues 263–294 are disordered; the sequence is QRERNQASRSSSHRSTSITGKPSQATGPSTNW. Positions 270–279 are enriched in low complexity; the sequence is SRSSSHRSTS. A compositionally biased stretch (polar residues) spans 280 to 294; the sequence is ITGKPSQATGPSTNW. A helical transmembrane segment spans residues 444–464; sequence LSAILLAFIITWTPYNIMVLV. At 465–478 the chain is on the extracellular side; sequence STFCDKCVPVALWH. A helical transmembrane segment spans residues 479–498; it reads LGYWLCYVNSTVNPICYALC. At 499 to 532 the chain is on the cytoplasmic side; the sequence is NRTFRKTFKMLLLCQWKKKKVEEKLYWQGNSKLP. Residues Thr501 and Thr505 each carry the phosphothreonine modification.

The protein belongs to the G-protein coupled receptor 1 family. Muscarinic acetylcholine receptor subfamily. CHRM5 sub-subfamily.

It localises to the cell membrane. The protein localises to the postsynaptic cell membrane. The muscarinic acetylcholine receptor mediates various cellular responses, including inhibition of adenylate cyclase, breakdown of phosphoinositides and modulation of potassium channels through the action of G proteins. Primary transducing effect is Pi turnover. This is Muscarinic acetylcholine receptor M5 (CHRM5) from Saimiri boliviensis boliviensis (Bolivian squirrel monkey).